The sequence spans 368 residues: Phosphate acyltransferase (368 aa).

This sequence belongs to the PlsX family. As to quaternary structure, homodimer. Probably interacts with PlsY.

The protein resides in the cytoplasm. The catalysed reaction is a fatty acyl-[ACP] + phosphate = an acyl phosphate + holo-[ACP]. The protein operates within lipid metabolism; phospholipid metabolism. Catalyzes the reversible formation of acyl-phosphate (acyl-PO(4)) from acyl-[acyl-carrier-protein] (acyl-ACP). This enzyme utilizes acyl-ACP as fatty acyl donor, but not acyl-CoA. The polypeptide is Phosphate acyltransferase (Herpetosiphon aurantiacus (strain ATCC 23779 / DSM 785 / 114-95)).